Reading from the N-terminus, the 357-residue chain is 3-isopropylmalate dehydrogenase (357 aa).

75–88 provides a ligand contact to NAD(+); sequence GPKWEHLPPAEQPE. Substrate is bound by residues arginine 96, arginine 106, arginine 135, and aspartate 224. Aspartate 224, aspartate 248, and aspartate 252 together coordinate Mg(2+). 282 to 294 is an NAD(+) binding site; sequence GSAPDIAGQGIAN.

It belongs to the isocitrate and isopropylmalate dehydrogenases family. LeuB type 1 subfamily. In terms of assembly, homodimer. Mg(2+) is required as a cofactor. The cofactor is Mn(2+).

It is found in the cytoplasm. The enzyme catalyses (2R,3S)-3-isopropylmalate + NAD(+) = 4-methyl-2-oxopentanoate + CO2 + NADH. The protein operates within amino-acid biosynthesis; L-leucine biosynthesis; L-leucine from 3-methyl-2-oxobutanoate: step 3/4. Functionally, catalyzes the oxidation of 3-carboxy-2-hydroxy-4-methylpentanoate (3-isopropylmalate) to 3-carboxy-4-methyl-2-oxopentanoate. The product decarboxylates to 4-methyl-2 oxopentanoate. In Desulfotalea psychrophila (strain LSv54 / DSM 12343), this protein is 3-isopropylmalate dehydrogenase.